The following is a 317-amino-acid chain: Ribosomal protein L11 methyltransferase (317 aa).

S-adenosyl-L-methionine-binding residues include T158, G179, D201, and N244.

Belongs to the methyltransferase superfamily. PrmA family.

It is found in the cytoplasm. The enzyme catalyses L-lysyl-[protein] + 3 S-adenosyl-L-methionine = N(6),N(6),N(6)-trimethyl-L-lysyl-[protein] + 3 S-adenosyl-L-homocysteine + 3 H(+). In terms of biological role, methylates ribosomal protein L11. The chain is Ribosomal protein L11 methyltransferase from Streptococcus agalactiae serotype Ia (strain ATCC 27591 / A909 / CDC SS700).